Consider the following 166-residue polypeptide: Large ribosomal subunit protein uL10 (166 aa).

It belongs to the universal ribosomal protein uL10 family. Part of the ribosomal stalk of the 50S ribosomal subunit. The N-terminus interacts with L11 and the large rRNA to form the base of the stalk. The C-terminus forms an elongated spine to which L12 dimers bind in a sequential fashion forming a multimeric L10(L12)X complex.

Its function is as follows. Forms part of the ribosomal stalk, playing a central role in the interaction of the ribosome with GTP-bound translation factors. This chain is Large ribosomal subunit protein uL10, found in Pseudomonas fluorescens (strain SBW25).